The sequence spans 424 residues: Tyrosine--tRNA ligase (424 aa).

Tyr-37 is a binding site for L-tyrosine. The 'HIGH' region signature appears at 42 to 51 (PTADSLHIGS). Tyr-174 and Gln-178 together coordinate L-tyrosine. Residues 234-238 (KFGKT) carry the 'KMSKS' region motif. Residue Lys-237 coordinates ATP. Positions 357–422 (SGLIDALAAG…RGKKLYALVD (66 aa)) constitute an S4 RNA-binding domain.

Belongs to the class-I aminoacyl-tRNA synthetase family. TyrS type 1 subfamily. Homodimer.

It is found in the cytoplasm. It catalyses the reaction tRNA(Tyr) + L-tyrosine + ATP = L-tyrosyl-tRNA(Tyr) + AMP + diphosphate + H(+). In terms of biological role, catalyzes the attachment of tyrosine to tRNA(Tyr) in a two-step reaction: tyrosine is first activated by ATP to form Tyr-AMP and then transferred to the acceptor end of tRNA(Tyr). This chain is Tyrosine--tRNA ligase, found in Chromobacterium violaceum (strain ATCC 12472 / DSM 30191 / JCM 1249 / CCUG 213 / NBRC 12614 / NCIMB 9131 / NCTC 9757 / MK).